Here is a 632-residue protein sequence, read N- to C-terminus: DNA ligase (632 aa).

Residues 45 to 49 (NEDYD) and 89 to 90 (SI) each bind NAD(+). Lys-127 functions as the N6-AMP-lysine intermediate in the catalytic mechanism. Arg-143, Glu-174, and Lys-286 together coordinate NAD(+). Residues Cys-374, Cys-377, Cys-390, and Cys-396 each contribute to the Zn(2+) site. Residues 561–632 (DKRIVFTGKM…EADYLSKITM (72 aa)) enclose the BRCT domain.

This sequence belongs to the NAD-dependent DNA ligase family. LigA subfamily. It depends on Mg(2+) as a cofactor. Requires Mn(2+) as cofactor.

The enzyme catalyses NAD(+) + (deoxyribonucleotide)n-3'-hydroxyl + 5'-phospho-(deoxyribonucleotide)m = (deoxyribonucleotide)n+m + AMP + beta-nicotinamide D-nucleotide.. Its function is as follows. DNA ligase that catalyzes the formation of phosphodiester linkages between 5'-phosphoryl and 3'-hydroxyl groups in double-stranded DNA using NAD as a coenzyme and as the energy source for the reaction. It is essential for DNA replication and repair of damaged DNA. This is DNA ligase from Vesicomyosocius okutanii subsp. Calyptogena okutanii (strain HA).